The primary structure comprises 352 residues: 4-hydroxy-2-oxovalerate aldolase (352 aa).

The Pyruvate carboxyltransferase domain maps to 13–265; sequence VRLTDTSLRD…KTGIDFFDIA (253 aa). 21–22 contributes to the substrate binding site; it reads RD. Asp-22 is a Mn(2+) binding site. Catalysis depends on His-25, which acts as the Proton acceptor. Positions 175 and 204 each coordinate substrate. Mn(2+) contacts are provided by His-204 and His-206. Tyr-295 contacts substrate.

This sequence belongs to the 4-hydroxy-2-oxovalerate aldolase family.

It carries out the reaction (S)-4-hydroxy-2-oxopentanoate = acetaldehyde + pyruvate. This chain is 4-hydroxy-2-oxovalerate aldolase, found in Mycobacterium avium (strain 104).